Reading from the N-terminus, the 529-residue chain is Bifunctional purine biosynthesis protein PurH (529 aa).

Residues 1 to 148 (MNNARPIRRA…KNHKDTTIIV (148 aa)) form the MGS-like domain.

This sequence belongs to the PurH family.

The enzyme catalyses (6R)-10-formyltetrahydrofolate + 5-amino-1-(5-phospho-beta-D-ribosyl)imidazole-4-carboxamide = 5-formamido-1-(5-phospho-D-ribosyl)imidazole-4-carboxamide + (6S)-5,6,7,8-tetrahydrofolate. It carries out the reaction IMP + H2O = 5-formamido-1-(5-phospho-D-ribosyl)imidazole-4-carboxamide. Its pathway is purine metabolism; IMP biosynthesis via de novo pathway; 5-formamido-1-(5-phospho-D-ribosyl)imidazole-4-carboxamide from 5-amino-1-(5-phospho-D-ribosyl)imidazole-4-carboxamide (10-formyl THF route): step 1/1. It participates in purine metabolism; IMP biosynthesis via de novo pathway; IMP from 5-formamido-1-(5-phospho-D-ribosyl)imidazole-4-carboxamide: step 1/1. This is Bifunctional purine biosynthesis protein PurH from Shewanella halifaxensis (strain HAW-EB4).